We begin with the raw amino-acid sequence, 168 residues long: Protein FAM163A (168 aa).

The chain crosses the membrane as a helical span at residues V6 to C26.

The protein belongs to the FAM163 family.

It is found in the membrane. The chain is Protein FAM163A (Fam163a) from Mus musculus (Mouse).